The chain runs to 301 residues: Cell division control protein 2 homolog 1 (301 aa).

One can recognise a Protein kinase domain in the interval 5–297; that stretch reads YQRLEKIGEG…AAQALEHPYF (293 aa). Residues 11–19 and K34 each bind ATP; that span reads IGEGSYGVV. Position 15 is a phosphoserine (S15). Y16 carries the post-translational modification Phosphotyrosine. D127 functions as the Proton acceptor in the catalytic mechanism. Phosphothreonine; by CAK is present on T160.

It belongs to the protein kinase superfamily. CMGC Ser/Thr protein kinase family. CDC2/CDKX subfamily. Forms a stable but non-covalent complex with a regulatory subunit and with a cyclin.

It catalyses the reaction L-seryl-[protein] + ATP = O-phospho-L-seryl-[protein] + ADP + H(+). The catalysed reaction is L-threonyl-[protein] + ATP = O-phospho-L-threonyl-[protein] + ADP + H(+). With respect to regulation, phosphorylation at Ser-15 or Tyr-16 inactivates the enzyme, while phosphorylation at Thr-160 activates it. Functionally, probably involved in the control of the cell cycle. In Trypanosoma congolense, this protein is Cell division control protein 2 homolog 1 (CRK1).